Reading from the N-terminus, the 585-residue chain is Switch-associated protein 70 (585 aa).

The PH domain maps to 210–306 (DVLKQGYMMK…WIQAIYSTIH (97 aa)). Residues 316-529 (HKEARQRRKE…VKKKLEMATH (214 aa)) adopt a coiled-coil conformation. The segment at 347 to 373 (ANENKQQELESVRKKLEEAASRAADEE) is disordered. Residues 351–373 (KQQELESVRKKLEEAASRAADEE) are compositionally biased toward basic and acidic residues.

In terms of assembly, the SWAP complex consists of NPM1, NCL, PARP1 and SWAP70. Post-translationally, tyrosine-phosphorylated. As to expression, spleen. Expressed only in B-cells that have been induced to switch to various Ig isotypes.

The protein resides in the cytoplasm. It is found in the cell membrane. The protein localises to the nucleus. It localises to the cell projection. Its subcellular location is the lamellipodium. The protein resides in the cytoskeleton. In terms of biological role, phosphatidylinositol 3,4,5-trisphosphate-dependent guanine nucleotide exchange factor (GEF) which, independently of RAS, transduces signals from tyrosine kinase receptors to RAC. It also mediates signaling of membrane ruffling. Regulates the actin cytoskeleton as an effector or adapter protein in response to agonist stimulated phosphatidylinositol (3,4)-bisphosphate production and cell protrusion. This Mus musculus (Mouse) protein is Switch-associated protein 70 (Swap70).